The chain runs to 308 residues: Putative gluconeogenesis factor (308 aa).

It belongs to the gluconeogenesis factor family.

It localises to the cytoplasm. In terms of biological role, required for morphogenesis under gluconeogenic growth conditions. In Pasteurella multocida (strain Pm70), this protein is Putative gluconeogenesis factor.